A 476-amino-acid chain; its full sequence is tRNA(Ile)-lysidine synthase (476 aa).

Ser26–Ser31 is an ATP binding site.

The protein belongs to the tRNA(Ile)-lysidine synthase family.

It is found in the cytoplasm. It catalyses the reaction cytidine(34) in tRNA(Ile2) + L-lysine + ATP = lysidine(34) in tRNA(Ile2) + AMP + diphosphate + H(+). Functionally, ligates lysine onto the cytidine present at position 34 of the AUA codon-specific tRNA(Ile) that contains the anticodon CAU, in an ATP-dependent manner. Cytidine is converted to lysidine, thus changing the amino acid specificity of the tRNA from methionine to isoleucine. This chain is tRNA(Ile)-lysidine synthase, found in Bartonella quintana (strain Toulouse) (Rochalimaea quintana).